An 859-amino-acid polypeptide reads, in one-letter code: Leucine--tRNA ligase (859 aa).

A 'HIGH' region motif is present at residues 42-52 (PYPSGRLHMGH). The short motif at 618 to 622 (KMSKS) is the 'KMSKS' region element. Lysine 621 serves as a coordination point for ATP.

Belongs to the class-I aminoacyl-tRNA synthetase family.

The protein resides in the cytoplasm. It catalyses the reaction tRNA(Leu) + L-leucine + ATP = L-leucyl-tRNA(Leu) + AMP + diphosphate. The sequence is that of Leucine--tRNA ligase from Shewanella sp. (strain W3-18-1).